The sequence spans 81 residues: Photosystem I iron-sulfur center (81 aa).

2 consecutive 4Fe-4S ferredoxin-type domains span residues 2 to 31 and 39 to 68; these read SHSV…MVPW and IAAS…IRVY. Positions 11, 14, 17, 21, 48, 51, 54, and 58 each coordinate [4Fe-4S] cluster.

In terms of assembly, the cyanobacterial PSI reaction center is composed of one copy each of PsaA,B,C,D,E,F,I,J,K,L,M and X, and forms trimeric complexes. [4Fe-4S] cluster is required as a cofactor.

It localises to the cellular thylakoid membrane. The enzyme catalyses reduced [plastocyanin] + hnu + oxidized [2Fe-2S]-[ferredoxin] = oxidized [plastocyanin] + reduced [2Fe-2S]-[ferredoxin]. Apoprotein for the two 4Fe-4S centers FA and FB of photosystem I (PSI); essential for photochemical activity. FB is the terminal electron acceptor of PSI, donating electrons to ferredoxin. The C-terminus interacts with PsaA/B/D and helps assemble the protein into the PSI complex. Required for binding of PsaD and PsaE to PSI. PSI is a plastocyanin/cytochrome c6-ferredoxin oxidoreductase, converting photonic excitation into a charge separation, which transfers an electron from the donor P700 chlorophyll pair to the spectroscopically characterized acceptors A0, A1, FX, FA and FB in turn. This Synechococcus elongatus (strain ATCC 33912 / PCC 7942 / FACHB-805) (Anacystis nidulans R2) protein is Photosystem I iron-sulfur center.